Consider the following 519-residue polypeptide: 2-isopropylmalate synthase (519 aa).

The Pyruvate carboxyltransferase domain maps to 5–267 (VVIFDTTLRD…STNINYKEIY (263 aa)). 4 residues coordinate Mn(2+): Asp-14, His-202, His-204, and Asn-238. The segment at 392–519 (SLKFFSVQSI…LKILKDFKKK (128 aa)) is regulatory domain.

This sequence belongs to the alpha-IPM synthase/homocitrate synthase family. LeuA type 1 subfamily. As to quaternary structure, homodimer. It depends on Mn(2+) as a cofactor.

The protein resides in the cytoplasm. It carries out the reaction 3-methyl-2-oxobutanoate + acetyl-CoA + H2O = (2S)-2-isopropylmalate + CoA + H(+). It functions in the pathway amino-acid biosynthesis; L-leucine biosynthesis; L-leucine from 3-methyl-2-oxobutanoate: step 1/4. In terms of biological role, catalyzes the condensation of the acetyl group of acetyl-CoA with 3-methyl-2-oxobutanoate (2-ketoisovalerate) to form 3-carboxy-3-hydroxy-4-methylpentanoate (2-isopropylmalate). This chain is 2-isopropylmalate synthase, found in Buchnera aphidicola subsp. Acyrthosiphon pisum (strain APS) (Acyrthosiphon pisum symbiotic bacterium).